The primary structure comprises 299 residues: tRNA dimethylallyltransferase (299 aa).

Residue 10–17 coordinates ATP; that stretch reads GATATGKS. 12 to 17 contributes to the substrate binding site; the sequence is TATGKS. Residues 35–38 form an interaction with substrate tRNA region; it reads DSRQ.

Belongs to the IPP transferase family. In terms of assembly, monomer. Mg(2+) serves as cofactor.

The catalysed reaction is adenosine(37) in tRNA + dimethylallyl diphosphate = N(6)-dimethylallyladenosine(37) in tRNA + diphosphate. Its function is as follows. Catalyzes the transfer of a dimethylallyl group onto the adenine at position 37 in tRNAs that read codons beginning with uridine, leading to the formation of N6-(dimethylallyl)adenosine (i(6)A). The polypeptide is tRNA dimethylallyltransferase (Rippkaea orientalis (strain PCC 8801 / RF-1) (Cyanothece sp. (strain PCC 8801))).